A 1003-amino-acid polypeptide reads, in one-letter code: Glutamate receptor ionotropic, NMDA 3B (1003 aa).

The signal sequence occupies residues 1–24 (MECVQTLWLSLALALARGSWVVRG). Over 25 to 574 (HPQPCGVPTR…PIGAFMWPLH (550 aa)) the chain is Extracellular. N-linked (GlcNAc...) asparagine glycans are attached at residues Asn69, Asn212, Asn344, Asn451, and Asn465. 2 cysteine pairs are disulfide-bonded: Cys439–Cys475 and Cys445–Cys476. The glycine site is built by Ser531, Ser533, and Arg538. Ser533 and Arg538 together coordinate D-serine. The chain crosses the membrane as a helical span at residues 575-594 (WSMWVGVFAALHLTALFLTL). The Cytoplasmic portion of the chain corresponds to 595 to 615 (YEWRSPYGLTPRGRNRGTVFS). Residues 616–627 (YSSALNLCYAIL) constitute an intramembrane region (discontinuously helical). Residues 628–641 (FGRTVSSKTPKCPT) lie on the Cytoplasmic side of the membrane. Residues 642 to 661 (GRFLMNLWAIFCLLVLSSYT) traverse the membrane as a helical segment. At 662-832 (ANLAAVMVGD…TLQMGVYHLS (171 aa)) the chain is on the extracellular side. Position 701 (Ser701) interacts with glycine. D-serine contacts are provided by Ser701, Ala702, and Asp745. Position 745 (Asp745) interacts with glycine. Asn786 carries an N-linked (GlcNAc...) asparagine glycan. Residues 833–848 (GLFVLLCLGLGSALLT) form a helical membrane-spanning segment. Residues 849–1003 (SLGEHVFYRL…RLLHAAPAES (155 aa)) lie on the Cytoplasmic side of the membrane. Residues 883–912 (LNTGPPEGQQERAEQECSGPKEEQPAADGA) are disordered. A compositionally biased stretch (basic and acidic residues) spans 891-906 (QQERAEQECSGPKEEQ). A coiled-coil region spans residues 947–986 (SNGPGVQAELRELELRIEAARERLRSALLRRGELRAQLGD). Residues 952–985 (VQAELRELELRIEAARERLRSALLRRGELRAQLG) form an involved in the trafficking and surface expression of NMDARs region.

Belongs to the glutamate-gated ion channel (TC 1.A.10.1) family. NR3B/GRIN3B subfamily. In terms of assembly, forms heterotetrameric channels that contain at least two GluN1 subunits and at least a combination of one GluN2 and one GluN3 subunits (in vitro). Forms heterotetrameric channels composed of two GluN1/zeta subunits (GRIN1), and two identical GluN3 subunits (GRIN3A or GRIN3B) (in vitro). Does not form functional homomeric channels. Expressed in the facial nucleus and the ambiguus nucleus of the brainstem, pons, medulla, spinal cord and cerebellum.

Its subcellular location is the cell membrane. It is found in the postsynaptic cell membrane. The catalysed reaction is Ca(2+)(in) = Ca(2+)(out). It catalyses the reaction Na(+)(in) = Na(+)(out). Its function is as follows. Component of a non-conventional N-methyl-D-aspartate (NMDA) receptors (NMDARs) that function as heterotetrameric, ligand-gated cation channels with low calcium permeability and low voltage-dependent block by Mg(2+). Forms glutamatergic receptor complexes with GluN1 and GluN2 subunits which are activated by glycine binding to the GluN1 and GluN3 subunits and L-glutamate binding to GluN2 subunits. Forms excitatory glycinergic receptor complexes with GluN1 alone which are activated by glycine binding to the GluN1 and GluN3 subunits. GluN3B subunit also binds D-serine and, in the absence of glycine, activates glycinergic receptor complexes, but with lower efficacy than glycine. Each GluN3 subunit confers differential attributes to channel properties, including activation, deactivation and desensitization kinetics, pH sensitivity, Ca2(+) permeability, and binding to allosteric modulators. The protein is Glutamate receptor ionotropic, NMDA 3B of Mus musculus (Mouse).